The following is a 358-amino-acid chain: Methionine import ATP-binding protein MetN (358 aa).

The ABC transporter domain maps to 14–255; that stretch reads VVFDAVSKRF…SRHETTRALL (242 aa). 52–59 lines the ATP pocket; the sequence is GRSGAGKS.

This sequence belongs to the ABC transporter superfamily. Methionine importer (TC 3.A.1.24) family. The complex is composed of two ATP-binding proteins (MetN), two transmembrane proteins (MetI) and a solute-binding protein (MetQ).

It is found in the cell inner membrane. It carries out the reaction L-methionine(out) + ATP + H2O = L-methionine(in) + ADP + phosphate + H(+). The catalysed reaction is D-methionine(out) + ATP + H2O = D-methionine(in) + ADP + phosphate + H(+). Functionally, part of the ABC transporter complex MetNIQ involved in methionine import. Responsible for energy coupling to the transport system. This is Methionine import ATP-binding protein MetN from Rhizobium meliloti (strain 1021) (Ensifer meliloti).